A 519-amino-acid polypeptide reads, in one-letter code: RLISAVILAVCSLISRRKPSPGSKKKRPPGPWRLPLIGNLLHLATSQPHVALRDLAMKHGPVMYLRLGQVDAVVISSPAAAQEVLRDKDTTFASRPSLLVADIILYGSMDMSFAPYGGNWRMLRKLCMSELLNTHKVRQLAAVRDSETLSLVRKVVYAAGAGGGGRGQRGEAPVVNLGRLVLSCSMAITGRATLGKLCGDEIMSVVDVAVLYGSGFCAGDLFPSLWFVDVVTGLTRRLWTARRRLDAIFDRILAECEARQRQEEKMTGDDGFLGVLLRIRDDDGEPETGGISTTSIKAILFDMLAGGTETTSSAAEWIMSELMRKPEAMAKAQAEVRGALDGKSPEDHEGQMDKLSYTRMVVKEGLRLHPVLPLLLPRSCQETCDVGGFEVTKGTKVIVNAWALARSPERWHDPEEFRPERFADDDGSSAAVAVDYRGSQFEYIPFGSGRRMCPGNTFGLAALELMVARLLYYFDWSLPDGMRPEELDMDTVVGSTMRRRNHLHLVPSPYKETELTVGI.

C453 provides a ligand contact to heme.

The protein belongs to the cytochrome P450 family. It depends on heme as a cofactor.

The protein resides in the membrane. The polypeptide is Cytochrome P450 CYP99A1 (CYP99A1) (Sorghum bicolor (Sorghum)).